A 492-amino-acid chain; its full sequence is MDPCKFRPSSSFDTKTTTTNAGAPVWNDNEALTVGPRGPILLEDYHLIEKVAHFARERIPERVVHARGASAKGFFECTHDVTDITCADFLRSPGAQTPVIVRFSTVIHERGSPETIRDPRGFAVKFYTREGNWDLLGNNFPVFFIRDGIKFPDVIHAFKPNPRSHVQEYWRVFDFLSHHPESLHTFFFLFDDVGIPTDYRHMDGFGVNTYTFVTRDAKARYVKFHWKPTCGVSCLMDDEATLVGGKNHSHATQDLYDSIAAGNFPEWKLFVQVIDPEEEERFDFDPLDDTKTWPEDEVPLRPVGRLVLNRNVDNFFNENEQLAFGPGLVVPGIYYSDDKMLQCRVFAYADTQRYRLGPNYLMLPVNAPKCAHHNNHYDGAMNFMHRDEEVDYYPSRHAPLRHAPPTPITPRPVVGRRQKATIHKQNDFKQPGERYRSWAPDRQERFIRRFAGELAHPKVSPELRAIWVNYLSQCDESLGVKIANRLNVKPSM.

The tract at residues 1-23 is disordered; the sequence is MDPCKFRPSSSFDTKTTTTNAGA. A compositionally biased stretch (polar residues) spans 8-21; sequence PSSSFDTKTTTTNA. Active-site residues include His65 and Asn138. Tyr348 contributes to the heme binding site.

Belongs to the catalase family. In terms of assembly, homotetramer. It depends on heme as a cofactor.

Its subcellular location is the peroxisome. The protein resides in the glyoxysome. The enzyme catalyses 2 H2O2 = O2 + 2 H2O. Occurs in almost all aerobically respiring organisms and serves to protect cells from the toxic effects of hydrogen peroxide. This is Catalase isozyme A from Oryza sativa subsp. indica (Rice).